Reading from the N-terminus, the 209-residue chain is MSWPATHDELEALGRELVAGGLGPFGGYEVAFGELSLTGPAHRIVEGLTLLRDDHGFQQLVDICGVDYPERERRFDVVYHLLSFTKNRRIRVKVQADEDTAVPSVTGVYPNADWYEREAFDMYGVFFDGHPDLRRILTDYGFHGHPLRKDFPMTGYVEVRYDDELKRVVYEPVKSVEWRNWDFLSPWEGVERGFAPILPGDEKGEEAKS.

The protein belongs to the complex I 30 kDa subunit family. As to quaternary structure, NDH-1 is composed of 14 different subunits. Subunits NuoB, C, D, E, F, and G constitute the peripheral sector of the complex.

The protein resides in the cell inner membrane. It carries out the reaction a quinone + NADH + 5 H(+)(in) = a quinol + NAD(+) + 4 H(+)(out). In terms of biological role, NDH-1 shuttles electrons from NADH, via FMN and iron-sulfur (Fe-S) centers, to quinones in the respiratory chain. The immediate electron acceptor for the enzyme in this species is believed to be ubiquinone. Couples the redox reaction to proton translocation (for every two electrons transferred, four hydrogen ions are translocated across the cytoplasmic membrane), and thus conserves the redox energy in a proton gradient. This is NADH-quinone oxidoreductase subunit C from Phenylobacterium zucineum (strain HLK1).